Here is a 286-residue protein sequence, read N- to C-terminus: Quinone oxidoreductase 2 (286 aa).

Residues 6–11 (GATGQL), Arg33, 73–75 (SSS), 138–143 (GWYSEN), and Arg171 contribute to the NADP(+) site.

The protein belongs to the NmrA-type oxidoreductase family. Monomer.

It carries out the reaction a quinone + NADH + H(+) = a quinol + NAD(+). It catalyses the reaction a quinone + NADPH + H(+) = a quinol + NADP(+). Its function is as follows. Quinone oxidoreductase that may play some additional role beyond quinone reduction. Potential redox sensor protein. Overexpression induces retardation of growth. The chain is Quinone oxidoreductase 2 (qorB) from Escherichia coli (strain K12).